Reading from the N-terminus, the 232-residue chain is 7-cyano-7-deazaguanine synthase (232 aa).

13-23 provides a ligand contact to ATP; it reads LSGGLDSATVL. 4 residues coordinate Zn(2+): Cys-194, Cys-204, Cys-207, and Cys-210.

Belongs to the QueC family. Zn(2+) serves as cofactor.

It catalyses the reaction 7-carboxy-7-deazaguanine + NH4(+) + ATP = 7-cyano-7-deazaguanine + ADP + phosphate + H2O + H(+). Its pathway is purine metabolism; 7-cyano-7-deazaguanine biosynthesis. Its function is as follows. Catalyzes the ATP-dependent conversion of 7-carboxy-7-deazaguanine (CDG) to 7-cyano-7-deazaguanine (preQ(0)). This chain is 7-cyano-7-deazaguanine synthase, found in Hydrogenovibrio crunogenus (strain DSM 25203 / XCL-2) (Thiomicrospira crunogena).